The following is a 63-amino-acid chain: MFTTKKPLLLLFFLGIISLSVCEQERDADEEDGGEVTEEEVKRAALKGCWTKSIPPKPCFGKR.

An N-terminal signal peptide occupies residues 1-22 (MFTTKKPLLLLFFLGIISLSVC). Positions 23–41 (EQERDADEEDGGEVTEEEV) are excised as a propeptide.

Belongs to the frog skin active peptide (FSAP) family. Brevinin subfamily. As to expression, expressed by the skin glands.

Its subcellular location is the secreted. In Odorrana hainanensis (Odor frog), this protein is Odorranain-B1.